The following is a 104-amino-acid chain: Urease subunit beta (104 aa).

It belongs to the urease beta subunit family. As to quaternary structure, heterotrimer of UreA (gamma), UreB (beta) and UreC (alpha) subunits. Three heterotrimers associate to form the active enzyme.

Its subcellular location is the cytoplasm. The catalysed reaction is urea + 2 H2O + H(+) = hydrogencarbonate + 2 NH4(+). The protein operates within nitrogen metabolism; urea degradation; CO(2) and NH(3) from urea (urease route): step 1/1. This chain is Urease subunit beta, found in Rhodococcus jostii (strain RHA1).